Consider the following 251-residue polypeptide: Putative imidazole glycerol phosphate synthase subunit hisF2 (251 aa).

Aspartate 130 is a catalytic residue.

The protein belongs to the HisA/HisF family. In terms of assembly, heterodimer of HisH and HisF.

The protein resides in the cytoplasm. The enzyme catalyses 5-[(5-phospho-1-deoxy-D-ribulos-1-ylimino)methylamino]-1-(5-phospho-beta-D-ribosyl)imidazole-4-carboxamide + L-glutamine = D-erythro-1-(imidazol-4-yl)glycerol 3-phosphate + 5-amino-1-(5-phospho-beta-D-ribosyl)imidazole-4-carboxamide + L-glutamate + H(+). It functions in the pathway amino-acid biosynthesis; L-histidine biosynthesis; L-histidine from 5-phospho-alpha-D-ribose 1-diphosphate: step 5/9. In terms of biological role, IGPS catalyzes the conversion of PRFAR and glutamine to IGP, AICAR and glutamate. The HisF subunit catalyzes the cyclization activity that produces IGP and AICAR from PRFAR using the ammonia provided by the HisH subunit. The chain is Putative imidazole glycerol phosphate synthase subunit hisF2 (hisF2) from Pseudomonas aeruginosa (strain ATCC 15692 / DSM 22644 / CIP 104116 / JCM 14847 / LMG 12228 / 1C / PRS 101 / PAO1).